We begin with the raw amino-acid sequence, 490 residues long: GTPase Der (490 aa).

2 EngA-type G domains span residues 3–166 and 203–376; these read PVVA…MDDV and IKLA…DSST. GTP is bound by residues 9–16, 56–60, 118–121, 209–216, 256–260, and 321–324; these read GRPNVGKS, DTGGI, NKTD, DTAGV, and NKWD. The KH-like domain occupies 377-461; it reads RRVSTAMLTR…PIRIQFKEGE (85 aa).

It belongs to the TRAFAC class TrmE-Era-EngA-EngB-Septin-like GTPase superfamily. EngA (Der) GTPase family. As to quaternary structure, associates with the 50S ribosomal subunit.

In terms of biological role, GTPase that plays an essential role in the late steps of ribosome biogenesis. This Salmonella choleraesuis (strain SC-B67) protein is GTPase Der.